Reading from the N-terminus, the 155-residue chain is Cardioactive peptide (155 aa).

The first 23 residues, 1-23, serve as a signal peptide directing secretion; it reads MRTSMRISLRLLALLACAICSQA. Positions 24–49 are excised as a propeptide; sequence SLERENNEGTNMANHKLSGVIQWKYE. An intrachain disulfide couples Cys-54 to Cys-60. Cys-60 is modified (cysteine amide). Positions 64 to 155 are excised as a propeptide; that stretch reads RTYPSYPPFS…MQQLEERESK (92 aa). Residues 135–155 are disordered; the sequence is NKQKMLQNEKEMQQLEERESK. Basic and acidic residues predominate over residues 141–155; sequence QNEKEMQQLEERESK.

In terms of tissue distribution, central nervous system; most neurons exhibit coexpression with Burs.

The protein localises to the secreted. Functionally, cardioregulatory neurohormone that increases heart beat rate during adult wing inflation; has no effect on beat amplitude. The effect of CCAP is both ino- and chronotropic. This is Cardioactive peptide from Drosophila melanogaster (Fruit fly).